A 123-amino-acid polypeptide reads, in one-letter code: Cliotide T12 (123 aa).

Positions 1–28 (MASLRIAPLALFFFLAASVMFTVEKTEA) are cleaved as a signal peptide. Positions 29–58 (GIPCGESCVFIPCITGAIGCSCKSKVCYRD) form a cross-link, cyclopeptide (Gly-Asp). 3 disulfides stabilise this stretch: cysteine 32–cysteine 48, cysteine 36–cysteine 50, and cysteine 41–cysteine 55. A propeptide spans 59–123 (HVIAAEAKTM…KDHLKMSVPN (65 aa)) (removed in mature form).

Post-translationally, contains 3 disulfide bonds. In terms of processing, this is a cyclic peptide.

Its function is as follows. Probably participates in a plant defense mechanism. This Clitoria ternatea (Butterfly pea) protein is Cliotide T12.